Consider the following 178-residue polypeptide: Caveolin-1 (178 aa).

S2 bears the N-acetylserine mark. A Phosphoserine modification is found at S2. The tract at residues 2–94 is required for homooligomerization; that stretch reads SGGKYVDSEG…WKASFTTFTV (93 aa). At 2-104 the chain is on the cytoplasmic side; sequence SGGKYVDSEG…TKYWFYRLLS (103 aa). An N6-acetyllysine; alternate modification is found at K5. A Glycyl lysine isopeptide (Lys-Gly) (interchain with G-Cter in ubiquitin); alternate cross-link involves residue K5. Residue Y6 is modified to Phosphotyrosine. S9 bears the Phosphoserine mark. The residue at position 14 (Y14) is a Phosphotyrosine; by ABL1. Y25 is subject to Phosphotyrosine. Glycyl lysine isopeptide (Lys-Gly) (interchain with G-Cter in ubiquitin) cross-links involve residues K26, K30, K39, K47, and K57. The interval 82–94 is interaction with CAVIN3; sequence DGIWKASFTTFTV. Positions 105-125 form an intramembrane region, helical; sequence ALFGIPMALIWGIYFAILSFL. Residues 126–178 are Cytoplasmic-facing; it reads HIWAVVPCIKSFLIEIQCISRVYSIYVHTFCDPLFEAIGKIFSNIRINMQKEI. The tract at residues 131 to 142 is interacts with SPRY1, SPRY2, SPRY3 and SPRY4; that stretch reads VPCIKSFLIEIQ. Residues C133, C143, and C156 are each lipidated (S-palmitoyl cysteine). Residues 149-160 form an interacts with SPRY1, SPRY2, and SPRY4 region; the sequence is SIYVHTFCDPLF. The segment at 167–178 is interacts with SPRY1, SPRY2, SPRY3 and SPRY4; the sequence is FSNIRINMQKEI.

This sequence belongs to the caveolin family. As to quaternary structure, homooligomer. Interacts (via the N-terminus) with DPP4; the interaction is direct. Forms a stable heterooligomeric complex with CAV2 that targets to lipid rafts and drives caveolae formation. Interacts with PACSIN2; this interaction induces membrane tubulation. Interacts with BMX, BTK, CTNNB1, CDH1, GLIPR2, JUP, NOSTRIN, SNAP25 and STX1A. Interacts with SLC7A9. Interacts with TGFBR1. Interacts with CAVIN3 (via leucine-zipper domain) in a cholesterol-sensitive manner. Interacts with CAVIN1. Interacts with EHD2 in a cholesterol-dependent manner. Forms a ternary complex with UBXN6 and VCP; mediates CAV1 targeting to lysosomes for degradation. Interacts with ABCG1; this interaction regulates ABCG1-mediated cholesterol efflux. Interacts with NEU3; this interaction enhances NEU3 sialidase activity within caveola. Interacts (via C-terminus) with SPRY1, SPRY2 (via C-terminus), SPRY3, and SPRY4. Post-translationally, phosphorylated at Tyr-14 by ABL1 in response to oxidative stress. In terms of processing, ubiquitinated. Undergo monoubiquitination and multi- and/or polyubiquitination. Monoubiquitination of N-terminal lysines promotes integration in a ternary complex with UBXN6 and VCP which promotes oligomeric CAV1 targeting to lysosomes for degradation. Ubiquitinated by ZNRF1; leading to degradation and modulation of the TLR4-mediated immune response.

The protein localises to the golgi apparatus membrane. It localises to the cell membrane. Its subcellular location is the membrane. The protein resides in the caveola. It is found in the membrane raft. Its function is as follows. May act as a scaffolding protein within caveolar membranes. Forms a stable heterooligomeric complex with CAV2 that targets to lipid rafts and drives caveolae formation. Mediates the recruitment of CAVIN proteins (CAVIN1/2/3/4) to the caveolae. Interacts directly with G-protein alpha subunits and can functionally regulate their activity. Involved in the costimulatory signal essential for T-cell receptor (TCR)-mediated T-cell activation. Its binding to DPP4 induces T-cell proliferation and NF-kappa-B activation in a T-cell receptor/CD3-dependent manner. Recruits CTNNB1 to caveolar membranes and may regulate CTNNB1-mediated signaling through the Wnt pathway. Negatively regulates TGFB1-mediated activation of SMAD2/3 by mediating the internalization of TGFBR1 from membrane rafts leading to its subsequent degradation. Binds 20(S)-hydroxycholesterol (20(S)-OHC). The chain is Caveolin-1 (CAV1) from Otolemur garnettii (Small-eared galago).